We begin with the raw amino-acid sequence, 135 residues long: MSALKSLVPARFLTLTAHLVIIITIFWSRDNNIQSCLPLEFTEDQYRTEDTRLTVALSVTLALFVLELAGFLSGVSMFNSNQALLSLITHSSACVCLSFFVFHQWPCWTYWIIFSICSVFPAVVELFLLLSQRVL.

The next 4 helical transmembrane spans lie at Leu7–Trp27, Val55–Val75, Ala83–His103, and Tyr110–Leu130.

Its subcellular location is the membrane. Functionally, may play a role in cilia formation and embryonic patterning. The protein is Transmembrane protein 107 (tmem107) of Danio rerio (Zebrafish).